The sequence spans 1766 residues: DNA-directed RNA polymerase II subunit RPB1-B (1766 aa).

Residues Cys69, Cys72, Cys79, and His82 each coordinate Zn(2+). Residues Asp487, Asp489, and Asp491 each coordinate Mg(2+). A bridging helix region spans residues 813–825 (PHEFFFHTMAGRE). Residues 1660-1766 (HAMSSAAPPS…EFGDEEEEEQ (107 aa)) are disordered. Residues 1706-1716 (RGDEPSTHRSD) are compositionally biased toward basic and acidic residues. Residues 1742–1756 (PTAKTPQQAAPPTAA) show a composition bias toward low complexity.

Belongs to the RNA polymerase beta' chain family. Component of the RNA polymerase II (Pol II) complex consisting of 12 subunits.

It is found in the nucleus. It carries out the reaction RNA(n) + a ribonucleoside 5'-triphosphate = RNA(n+1) + diphosphate. DNA-dependent RNA polymerase catalyzes the transcription of DNA into RNA using the four ribonucleoside triphosphates as substrates. Largest and catalytic component of RNA polymerase II which synthesizes mRNA precursors and many functional non-coding RNAs. Forms the polymerase active center together with the second largest subunit. Pol II is the central component of the basal RNA polymerase II transcription machinery. It is composed of mobile elements that move relative to each other. RPB1 is part of the core element with the central large cleft, the clamp element that moves to open and close the cleft and the jaws that are thought to grab the incoming DNA template. At the start of transcription, a single-stranded DNA template strand of the promoter is positioned within the central active site cleft of Pol II. A bridging helix emanates from RPB1 and crosses the cleft near the catalytic site and is thought to promote translocation of Pol II by acting as a ratchet that moves the RNA-DNA hybrid through the active site by switching from straight to bent conformations at each step of nucleotide addition. During transcription elongation, Pol II moves on the template as the transcript elongates. This chain is DNA-directed RNA polymerase II subunit RPB1-B (TRP5.9), found in Trypanosoma brucei brucei.